A 176-amino-acid polypeptide reads, in one-letter code: Ribosome maturation factor RimM (176 aa).

In terms of domain architecture, PRC barrel spans 99 to 176 (EDEYYWSDLV…RMVVDWERDF (78 aa)).

The protein belongs to the RimM family. In terms of assembly, binds ribosomal protein uS19.

It localises to the cytoplasm. An accessory protein needed during the final step in the assembly of 30S ribosomal subunit, possibly for assembly of the head region. Essential for efficient processing of 16S rRNA. May be needed both before and after RbfA during the maturation of 16S rRNA. It has affinity for free ribosomal 30S subunits but not for 70S ribosomes. In Psychrobacter sp. (strain PRwf-1), this protein is Ribosome maturation factor RimM.